A 596-amino-acid polypeptide reads, in one-letter code: Actin-related protein 9 (596 aa).

The segment at 148–178 (LASPAETSPDKGDASASEAVPDVTDSKDTSE) is disordered.

Belongs to the actin family. ARP8 subfamily.

The chain is Actin-related protein 9 (ARP9) from Arabidopsis thaliana (Mouse-ear cress).